A 586-amino-acid chain; its full sequence is Arrestin-related trafficking adapter 5 (586 aa).

Disordered stretches follow at residues 123 to 145 (GENAENQHNSSSGRSTSNQDMDT) and 182 to 217 (ENGVTGTPFEGLRENARSRSSSSNTLNNNSHSYSNR). Residues 126–145 (AENQHNSSSGRSTSNQDMDT) show a composition bias toward polar residues. Residues 199 to 216 (SRSSSSNTLNNNSHSYSN) are compositionally biased toward low complexity. Residue lysine 364 forms a Glycyl lysine isopeptide (Lys-Gly) (interchain with G-Cter in ubiquitin) linkage.

The protein belongs to the arrestin family. As to quaternary structure, interacts with RSP5. Ubiquitinated by RSP5.

May regulate endocytosis by recruiting RSP5 ubiquitin ligase activity to specific plasma membrane proteins in response to extracellular stimuli. This chain is Arrestin-related trafficking adapter 5 (ART5), found in Saccharomyces cerevisiae (strain ATCC 204508 / S288c) (Baker's yeast).